The following is a 99-amino-acid chain: Cell division protein FtsB (99 aa).

The Cytoplasmic segment spans residues 1–3 (MKF). Residues 4–21 (FVIALIVLLGLLQYRLWS) traverse the membrane as a helical segment. The Periplasmic portion of the chain corresponds to 22 to 99 (GDNSLPEYFV…GDRSVSSPSQ (78 aa)). Residues 31-73 (VLQKQIAAQQEGNAKLNERNQVLKEEIIDLKSGTEAIEERARN) adopt a coiled-coil conformation.

It belongs to the FtsB family. As to quaternary structure, part of a complex composed of FtsB, FtsL and FtsQ.

The protein resides in the cell inner membrane. Essential cell division protein. May link together the upstream cell division proteins, which are predominantly cytoplasmic, with the downstream cell division proteins, which are predominantly periplasmic. In Shewanella sp. (strain ANA-3), this protein is Cell division protein FtsB.